We begin with the raw amino-acid sequence, 59 residues long: Large ribosomal subunit protein bL32 (59 aa).

The interval methionine 1–glutamate 59 is disordered. A compositionally biased stretch (basic residues) spans arginine 49–glutamate 59.

It belongs to the bacterial ribosomal protein bL32 family.

This is Large ribosomal subunit protein bL32 (rpmF) from Neisseria meningitidis serogroup A / serotype 4A (strain DSM 15465 / Z2491).